The primary structure comprises 1065 residues: MVAYLNIHTAYDLLNSSLKIEDAVRLAVSENVDALAITDTNVLYGFPKFYDACIANNIKPIFGMTIYVTNGLNTVETVVLAKNNDGLKDLYQLSSEIKMNSMENVSFELLQQFSSNLIIIFKNVADEHRDIVQVFDSHEDTYLDHQSVLVQGIKHVWIQNVCYQTRQDADTISALAAIRDNAKLDLIHDQEDFGAHFLTEKEIKQLDINQEYLTQVDVIAQKCNAELKYHQSLLPQYQTPNDESAKKYLWRVLVTQLKKLELNYDVYLERLKYEYKVITNMGFEDYFLIVSDLIHYAKTNDVMVGPGRGSSAGSLVSYLLGITTIDPIKFNLLFERFLNPERVTMPDIDIDFEDTRRERVIQYVQEKYGELHVSGIVTFGHLLARAVARDVGRIMGFDEVTLNEISSLIPHKLGITLDEAYQIDDFKKFVHRNHRHERWFSICKKLEGLPRHTSTHAAGIIINDHPLYEYAPLTKGDTGLLTQWTMTEAERIGLLKIDFLGLRNLSIIHQILIQVKKDLGINIDIEKIPFDDQKVFELLSQGDTTGIFQLESDGVRSVLKKLKPEHFEDIVAVTSLYRPGPMEEIPTYITRRHDPSKVQYLHPHLEPILKNTYGVIIYQEQIMQIASTFANFSYGEADILRRAMSKKNRAVLESERQHFIEGAKQNGYHEDISKQIFDLILKFADYGFPRAHAVSYSKIAYIMSFLKVHYPNYFYANILSNVIGSEKKTAQMIEEAKKQGITILPPNINESHWFYKPSQEGIYLSIGTIKGVGYQSVKVIVDERYQNGKFKDFFDFARRIPKRVKTRKLLEALILVGAFDAFGKTRSTLLQAIDQVLDGDLNIEQDGFLFDILTPKQMYEDKEELPDALISQYEKEYLGFYVSQHPVDKKFVAKQYLTIFKLSNAQNYKPILVQFDKVKQIRTKNGQNMAFVTLNDGIETLDGVIFPNQFKKYEELLSHNDLFIVSGKFDHRKQQRQLIINEIQTLATFEEQKLAFAKQIIIRNKSQIDMFEEMIKATKENANDVVLSFYDETIKQMTTLGYINQKDSMFNNFIQSFNPSDIRLI.

This sequence belongs to the DNA polymerase type-C family. DnaE subfamily. In terms of assembly, DNA polymerase III contains a core (composed of alpha, epsilon and theta chains) that associates with a tau subunit. This core dimerizes to form the PolIII' complex. PolIII' associates with the gamma complex (composed of gamma, delta, delta', psi and chi chains) and with the beta chain to form the complete DNA polymerase III complex.

It localises to the cytoplasm. It catalyses the reaction DNA(n) + a 2'-deoxyribonucleoside 5'-triphosphate = DNA(n+1) + diphosphate. Functionally, DNA polymerase III is a complex, multichain enzyme responsible for most of the replicative synthesis in bacteria. This DNA polymerase also exhibits 3' to 5' exonuclease activity. The alpha chain is the DNA polymerase. This Staphylococcus aureus (strain Mu50 / ATCC 700699) protein is DNA polymerase III subunit alpha (dnaE).